Reading from the N-terminus, the 233-residue chain is 7-cyano-7-deazaguanine synthase (233 aa).

Residue 7–17 (CSGGLDSVSLA) coordinates ATP. Zn(2+)-binding residues include cysteine 185, cysteine 193, cysteine 196, and cysteine 199.

This sequence belongs to the QueC family. The cofactor is Zn(2+).

It carries out the reaction 7-carboxy-7-deazaguanine + NH4(+) + ATP = 7-cyano-7-deazaguanine + ADP + phosphate + H2O + H(+). It functions in the pathway purine metabolism; 7-cyano-7-deazaguanine biosynthesis. Its function is as follows. Catalyzes the ATP-dependent conversion of 7-carboxy-7-deazaguanine (CDG) to 7-cyano-7-deazaguanine (preQ(0)). The protein is 7-cyano-7-deazaguanine synthase of Paracoccus denitrificans (strain Pd 1222).